Here is a 343-residue protein sequence, read N- to C-terminus: N-acetyl-gamma-glutamyl-phosphate reductase (343 aa).

The active site involves Cys-146.

The protein belongs to the NAGSA dehydrogenase family. Type 1 subfamily.

It localises to the cytoplasm. It carries out the reaction N-acetyl-L-glutamate 5-semialdehyde + phosphate + NADP(+) = N-acetyl-L-glutamyl 5-phosphate + NADPH + H(+). It functions in the pathway amino-acid biosynthesis; L-arginine biosynthesis; N(2)-acetyl-L-ornithine from L-glutamate: step 3/4. Functionally, catalyzes the NADPH-dependent reduction of N-acetyl-5-glutamyl phosphate to yield N-acetyl-L-glutamate 5-semialdehyde. The polypeptide is N-acetyl-gamma-glutamyl-phosphate reductase (Arthrobacter sp. (strain FB24)).